The following is a 345-amino-acid chain: Tubulin-folding cofactor C (345 aa).

At methionine 1 the chain carries N-acetylmethionine. A compositionally biased stretch (polar residues) spans 1 to 10 (MEDDGQSSVA). Residues 1–83 (MEDDGQSSVA…SRLASSSTDS (83 aa)) are disordered. The segment covering 23-39 (DMLERLSARHQARKSDS) has biased composition (basic and acidic residues). Residues 40–55 (PDSSSSSSSTLESTSS) are compositionally biased toward low complexity. Over residues 61-73 (SDSKRSIESRIAE) the composition is skewed to basic and acidic residues. Low complexity predominate over residues 74–83 (SRLASSSTDS). The C-CAP/cofactor C-like domain occupies 169–318 (PPKLVPVRDS…NWANVDDFRW (150 aa)).

This sequence belongs to the TBCC family. Supercomplex made of cofactors A to E. Cofactors A and D function by capturing and stabilizing tubulin in a quasi-native conformation. Cofactor E binds to the cofactor D-tubulin complex; interaction with cofactor C then causes the release of tubulin polypeptides that are committed to the native state. In terms of tissue distribution, ubiquitously expressed (at protein level). Present in leaves, roots, flowers, and stems.

It is found in the cytoplasm. In terms of biological role, essential tubulin-folding protein involved in the final step of the tubulin folding pathway. Required for continuous microtubule cytoskeleton organization, mitotic division, cytokinesis, and to couple cell cycle progression to cell division in embryos and endosperms. Not essential for cell viability. Binds probably to the multimeric supercomplex, stimulating GTP hydrolysis by the bound beta-tubulin and the release of the alpha-/beta-tubulin heterodimer. In Arabidopsis thaliana (Mouse-ear cress), this protein is Tubulin-folding cofactor C (TFCC).